Reading from the N-terminus, the 570-residue chain is Formate--tetrahydrofolate ligase (570 aa).

Residue 65-72 (TPFGEGKT) participates in ATP binding.

This sequence belongs to the formate--tetrahydrofolate ligase family.

The catalysed reaction is (6S)-5,6,7,8-tetrahydrofolate + formate + ATP = (6R)-10-formyltetrahydrofolate + ADP + phosphate. It participates in one-carbon metabolism; tetrahydrofolate interconversion. The chain is Formate--tetrahydrofolate ligase from Shewanella woodyi (strain ATCC 51908 / MS32).